We begin with the raw amino-acid sequence, 122 residues long: Acidic phospholipase A2 BlatPLA2 (122 aa).

7 cysteine pairs are disulfide-bonded: C26-C115, C28-C44, C43-C95, C49-C122, C50-C88, C57-C81, and C75-C86. The Ca(2+) site is built by Y27, G29, and G31. H47 is an active-site residue. D48 is a Ca(2+) binding site. Residue D89 is part of the active site.

It belongs to the phospholipase A2 family. Group II subfamily. D49 sub-subfamily. As to quaternary structure, monomer. Requires Ca(2+) as cofactor. Expressed by the venom gland.

Its subcellular location is the secreted. The catalysed reaction is a 1,2-diacyl-sn-glycero-3-phosphocholine + H2O = a 1-acyl-sn-glycero-3-phosphocholine + a fatty acid + H(+). Acidic phospholipase A2 (PLA2) that only causes a mild edema, when subcutaneously injected in the mice foot. PLA2 catalyzes the calcium-dependent hydrolysis of the 2-acyl groups in 3-sn-phosphoglycerides. This chain is Acidic phospholipase A2 BlatPLA2, found in Bothriechis lateralis (Side-striped palm pitviper).